The primary structure comprises 145 residues: Maximins 3/H11 type 3 (145 aa).

Positions 1-18 are cleaved as a signal peptide; that stretch reads MNFKYIVAVSFLIASAYA. 2 propeptides span residues 19–43 and 75–122; these read RSVQ…LREI and TAEE…TKKE. Isoleucine 144 is modified (isoleucine amide).

This sequence belongs to the bombinin family. In terms of tissue distribution, expressed by the skin glands.

Its subcellular location is the secreted. Its function is as follows. Maximin-3 shows antibacterial activity against both Gram-positive and Gram-negative bacteria. It also shows antimicrobial activity against the fungus C.albicans, but not against A.flavus nor P.uticale. It has little hemolytic activity. It possess a significant cytotoxicity against tumor cell lines. It possess a significant anti-HIV activity. It shows high spermicidal activity. In terms of biological role, maximin-H11 shows antimicrobial activity against bacteria and against the fungus C.albicans. Shows strong hemolytic activity. The protein is Maximins 3/H11 type 3 of Bombina maxima (Giant fire-bellied toad).